We begin with the raw amino-acid sequence, 574 residues long: Interleukin-22 receptor subunit alpha-1 (574 aa).

An N-terminal signal peptide occupies residues 1–15 (MRTLLTILTVGSLAA). At 16 to 228 (HAPEDPSDLL…VKTLPDRTWT (213 aa)) the chain is on the extracellular side. Fibronectin type-III domains are found at residues 17-124 (APED…LKPP) and 141-221 (PTPT…RVKT). Cysteines 71 and 79 form a disulfide. N-linked (GlcNAc...) asparagine glycans are attached at residues Asn80 and Asn172. Residues Cys128 and Cys217 are joined by a disulfide bond. A helical transmembrane segment spans residues 229-249 (YSFSGAFLFSMGFLVAVLCYL). Residues 250–574 (SYRYVTKPPA…GLALTVQWES (325 aa)) lie on the Cytoplasmic side of the membrane. 3 disordered regions span residues 388 to 440 (SSYA…AGSC), 454 to 489 (AMEE…EGTP), and 507 to 560 (HPMS…TELD). A phosphoserine mark is found at Ser410 and Ser414.

This sequence belongs to the type II cytokine receptor family. Heterodimer with IL10RB and with IL20RB. IL22 binding to heterodimer is greater than binding to IL22RA1 alone. Interacts with FBXW12; the interaction promotes ubiquitination of IL22RA1. In terms of processing, ubiquitinated. In terms of tissue distribution, expressed in colon, liver, lung, pancreas and kidney. No expression in immune cells such as monocytes, T-cells, and NK-cells. Expressed in keratinocytes of normal skin as well as in psoriatic skin lesion. Detected in normal blood brain barrier endothelial cells as well as in multiple sclerosis lesions; Strongly expressed on central nervous system vessels within infiltrated multiple sclerosis lesions. Overexpressed in synovial fluid cells from rheumatoid arthritis and spondyloarthropathy patients.

It localises to the cell membrane. Its function is as follows. Component of the receptor for IL20, IL22 and IL24. Component of IL22 receptor formed by IL22RA1 and IL10RB enabling IL22 signaling via JAK/STAT pathways. IL22 also induces activation of MAPK1/MAPK3 and Akt kinases pathways. Component of one of the receptor for IL20 and IL24 formed by IL22RA1 and IL20RB also signaling through STATs activation. Mediates IL24 antiangiogenic activity as well as IL24 inhibitory effect on endothelial cell tube formation and differentiation. The chain is Interleukin-22 receptor subunit alpha-1 (IL22RA1) from Homo sapiens (Human).